We begin with the raw amino-acid sequence, 535 residues long: CTP synthase (535 aa).

Positions 1-268 (MPNKYIVVTG…VSKILSRLKL (268 aa)) are amidoligase domain. Ser-14 contributes to the CTP binding site. A UTP-binding site is contributed by Ser-14. ATP is bound at residue 15–20 (SVGKGT). Tyr-55 contributes to the L-glutamine binding site. Asp-72 contacts ATP. Residues Asp-72 and Glu-142 each coordinate Mg(2+). CTP is bound by residues 149 to 151 (DIE), 189 to 194 (KTKPLQ), and Lys-225. UTP-binding positions include 189–194 (KTKPLQ) and Lys-225. ATP is bound at residue Val-243. One can recognise a Glutamine amidotransferase type-1 domain in the interval 302–535 (YTKLKDSYIS…LGFIRAVASL (234 aa)). L-glutamine is bound at residue Gly-359. Cys-386 serves as the catalytic Nucleophile; for glutamine hydrolysis. L-glutamine is bound by residues 387–390 (FGFQ), Glu-410, and Arg-467. Residues His-511 and Glu-513 contribute to the active site.

Belongs to the CTP synthase family. Homotetramer in the presence of ATP and UTP. The enzyme dissociates into homodimers in the absence of substrate nucleotides.

The catalysed reaction is UTP + L-glutamine + ATP + H2O = CTP + L-glutamate + ADP + phosphate + 2 H(+). It carries out the reaction L-glutamine + H2O = L-glutamate + NH4(+). The enzyme catalyses UTP + NH4(+) + ATP = CTP + ADP + phosphate + 2 H(+). The protein operates within pyrimidine metabolism; CTP biosynthesis via de novo pathway; CTP from UDP: step 2/2. With respect to regulation, allosterically activated by GTP, when glutamine is the substrate; GTP has no effect on the reaction when ammonia is the substrate. The allosteric effector GTP functions by stabilizing the protein conformation that binds the tetrahedral intermediate(s) formed during glutamine hydrolysis. Inhibited by the product CTP, via allosteric rather than competitive inhibition. Its function is as follows. Catalyzes the ATP-dependent amination of UTP to CTP with either L-glutamine or ammonia as the source of nitrogen. Regulates intracellular CTP levels through interactions with the four ribonucleotide triphosphates. This Saccharolobus solfataricus (strain ATCC 35092 / DSM 1617 / JCM 11322 / P2) (Sulfolobus solfataricus) protein is CTP synthase.